Consider the following 183-residue polypeptide: Oleosin 5 (183 aa).

The tract at residues 1–39 is polar; it reads MADVRTHSHQLQVHPQRQHEGGIKVLYPQSGPSSTQVLA. 3 helical membrane-spanning segments follow: residues 37–57, 66–86, and 87–107; these read VLAV…AGLT, MLAF…AFVI, and GLAM…LSSM. The hydrophobic stretch occupies residues 40 to 113; it reads VFVGVPIGGT…LSSMSWVLNY (74 aa). A disordered region spans residues 144–183; it reads KDAGQTIEDKAHDVREAKTFDVRDRDTTKGTHNVRDTKTT.

It belongs to the oleosin family.

The protein localises to the lipid droplet. The protein resides in the membrane. May have a structural role to stabilize the lipid body during desiccation of the seed by preventing coalescence of the oil. Probably interacts with both lipid and phospholipid moieties of lipid bodies. May also provide recognition signals for specific lipase anchorage in lipolysis during seedling growth. The protein is Oleosin 5 of Arabidopsis thaliana (Mouse-ear cress).